We begin with the raw amino-acid sequence, 696 residues long: MRRFLLLYATQRGQAKAIAEEISEQAVSHGFSADLHCISESEKYDLKTETGPLVMVVSTTGTGDPPDTARKFVKEIHNKTLPTDYFAHLRYGLLGLGDSEYTYFCNGGKVIDKRLQELGAQRFYDTGHADDCVGLELVVEPWIDGLWAALTKHFKSLGGQENMSDTLSRASDAPLSTAMKPELLHIQSQVELLRLEDVGERDSELREQNETNRGQQGRIEDFDSSLVHSVPPLSQSSLSIPAVPPEYLEVHLQESLGQEENQASVPSGDPSFQVPISKAIRLTTNDAVKSTLLLELDISKIEFSHQPGDSFNVTCPNSDREVEELLQRLQLADKRAHRVILKIKTDTKKKGAALPAHVPEGRSLQFILTWCLEIRAVPKKAFLRALAEHTSSATEKRRLQELCSKQGAADYNRFIRDASVCLLDLLLTFPSCQPPLSLLLEHLPKLQPRPYSCASSSLRHPDKLHFVFNIVEFPPSTTAASPRKGVCTGWLATLVAPFLQPNTDVSNADSGDTLAPEIRISPRATNAFHLPEDPSAPIIMVGPGTGVAPFVGFLQHREKLQEQHPDGKFGAMWLFFGCRHKDRDYLFREELRHFLKTGVLTHLKVSFSRDAAPDGEEAPAKYVQDNLQRHSQQVARTLLQENGYIYVCGDAKNMAKDVNDTLIGIISNEAGVDKLEAMKTLATLKQEKRYLQDIWS.

The region spanning 4–147 is the Flavodoxin-like domain; the sequence is FLLLYATQRG…VVEPWIDGLW (144 aa). FMN contacts are provided by residues 10 to 14 and 93 to 124; these read TQRGQ and LLGL…QRFY. Residues 166 to 245 are hinge; that stretch reads TLSRASDAPL…SSLSIPAVPP (80 aa). Phosphoserine is present on residues Ser171 and Ser188. The FAD-binding FR-type domain maps to 269 to 531; the sequence is DPSFQVPISK…PRATNAFHLP (263 aa). Lys289 contacts NADP(+). FAD is bound by residues 449–452 and 485–488; these read RPYS and GVCT. NADP(+) is bound by residues 608 to 609, 622 to 624, and Asp657; these read SR and YVQ. Trp695 provides a ligand contact to FAD.

Forms a multiprotein complex with MMACHC, MMADHC and MTR. FAD serves as cofactor. It depends on FMN as a cofactor.

The protein resides in the cytoplasm. The catalysed reaction is 2 methylcob(III)alamin-[methionine synthase] + 2 S-adenosyl-L-homocysteine + NADP(+) + H(+) = 2 cob(II)alamin-[methionine synthase] + 2 S-adenosyl-L-methionine + NADPH. The enzyme catalyses 2 cob(II)alamin + A + 2 H2O + 2 H(+) = 2 aquacob(III)alamin + AH2. In terms of biological role, key enzyme in methionine and folate homeostasis responsible for the reactivation of methionine synthase (MTR/MS) activity by catalyzing the reductive methylation of MTR-bound cob(II)alamin. Cobalamin (vitamin B12) forms a complex with MTR to serve as an intermediary in methyl transfer reactions that cycles between MTR-bound methylcob(III)alamin and MTR bound-cob(I)alamin forms, and occasional oxidative escape of the cob(I)alamin intermediate during the catalytic cycle leads to the inactive cob(II)alamin species. The processing of cobalamin in the cytosol occurs in a multiprotein complex composed of at least MMACHC, MMADHC, MTRR and MTR which may contribute to shuttle safely and efficiently cobalamin towards MTR in order to produce methionine. Also necessary for the utilization of methyl groups from the folate cycle, thereby affecting transgenerational epigenetic inheritance. Also acts as a molecular chaperone for methionine synthase by stabilizing apoMTR and incorporating methylcob(III)alamin into apoMTR to form the holoenzyme. Also serves as an aquacob(III)alamin reductase by reducing aquacob(III)alamin to cob(II)alamin; this reduction leads to stimulation of the conversion of apoMTR and aquacob(III)alamin to MTR holoenzyme. In Mus musculus (Mouse), this protein is Methionine synthase reductase.